Reading from the N-terminus, the 343-residue chain is Anthranilate phosphoribosyltransferase (343 aa).

Residues glycine 84, 87-88 (GD), threonine 92, 94-97 (NIST), 112-120 (KHGNRGVSS), and serine 124 each bind 5-phospho-alpha-D-ribose 1-diphosphate. Glycine 84 serves as a coordination point for anthranilate. Residue serine 96 coordinates Mg(2+). Asparagine 115 contributes to the anthranilate binding site. Arginine 170 contributes to the anthranilate binding site. Residues aspartate 229 and glutamate 230 each coordinate Mg(2+).

The protein belongs to the anthranilate phosphoribosyltransferase family. Homodimer. The cofactor is Mg(2+).

The catalysed reaction is N-(5-phospho-beta-D-ribosyl)anthranilate + diphosphate = 5-phospho-alpha-D-ribose 1-diphosphate + anthranilate. It functions in the pathway amino-acid biosynthesis; L-tryptophan biosynthesis; L-tryptophan from chorismate: step 2/5. Catalyzes the transfer of the phosphoribosyl group of 5-phosphorylribose-1-pyrophosphate (PRPP) to anthranilate to yield N-(5'-phosphoribosyl)-anthranilate (PRA). The polypeptide is Anthranilate phosphoribosyltransferase (Burkholderia pseudomallei (strain 1106a)).